The following is a 145-amino-acid chain: Putative pre-16S rRNA nuclease (145 aa).

This sequence belongs to the YqgF nuclease family.

The protein localises to the cytoplasm. In terms of biological role, could be a nuclease involved in processing of the 5'-end of pre-16S rRNA. This chain is Putative pre-16S rRNA nuclease, found in Limosilactobacillus fermentum (strain NBRC 3956 / LMG 18251) (Lactobacillus fermentum).